The following is a 229-amino-acid chain: LexA repressor (229 aa).

Positions 28-48 form a DNA-binding region, H-T-H motif; that stretch reads IREIGEALDIRSTNGVNDHLK. Active-site for autocatalytic cleavage activity residues include Ser-147 and Lys-184.

This sequence belongs to the peptidase S24 family. In terms of assembly, homodimer.

The enzyme catalyses Hydrolysis of Ala-|-Gly bond in repressor LexA.. Its function is as follows. Represses a number of genes involved in the response to DNA damage (SOS response), including recA and lexA. In the presence of single-stranded DNA, RecA interacts with LexA causing an autocatalytic cleavage which disrupts the DNA-binding part of LexA, leading to derepression of the SOS regulon and eventually DNA repair. This Anaeromyxobacter dehalogenans (strain 2CP-C) protein is LexA repressor.